The primary structure comprises 223 residues: Deoxyribose-phosphate aldolase (223 aa).

Residue aspartate 89 is the Proton donor/acceptor of the active site. Lysine 152 functions as the Schiff-base intermediate with acetaldehyde in the catalytic mechanism. Lysine 181 functions as the Proton donor/acceptor in the catalytic mechanism.

It belongs to the DeoC/FbaB aldolase family. DeoC type 1 subfamily.

The protein localises to the cytoplasm. It carries out the reaction 2-deoxy-D-ribose 5-phosphate = D-glyceraldehyde 3-phosphate + acetaldehyde. The protein operates within carbohydrate degradation; 2-deoxy-D-ribose 1-phosphate degradation; D-glyceraldehyde 3-phosphate and acetaldehyde from 2-deoxy-alpha-D-ribose 1-phosphate: step 2/2. Its function is as follows. Catalyzes a reversible aldol reaction between acetaldehyde and D-glyceraldehyde 3-phosphate to generate 2-deoxy-D-ribose 5-phosphate. This Bacillus cereus (strain G9842) protein is Deoxyribose-phosphate aldolase.